The sequence spans 97 residues: YcgL domain-containing protein PSEEN4034 (97 aa).

The YcgL domain maps to 3-87 (RICSIYKSPR…PDDDYIEHLP (85 aa)).

This chain is YcgL domain-containing protein PSEEN4034, found in Pseudomonas entomophila (strain L48).